Consider the following 499-residue polypeptide: Putative antiporter subunit mnhD2 (499 aa).

The next 14 membrane-spanning stretches (helical) occupy residues 1–21 (MSNLIILPMLLPFVCALILVF), 31–51 (ILSITTMIVNTMISIALLIYV), 77–97 (LSLLMVSVSSFVVTLIMAYGF), 107–127 (FHLPTFILLLTVGVIGSFLTS), 129–149 (LFNLYVMFEIMLLASFVLVTL), 160–180 (IVYVVLNILGSWLLLLGIGML), 208–228 (ISLVFLVAFSSKAALVIFMWL), 239–259 (LAALFAALMTKVGAYALIRFF), 272–292 (TLLVFMACITMIIGAFGVIAY), 307–327 (IGFIILGLGSHTISGVNGAIF), 329–349 (LANDIIVKTLLFFVIGSLVYM), 367–387 (FFGVAFVVVIFAIGGVPPFSG), 402–422 (GNYIGLALMIVTSLIAMYSLF), and 449–469 (GLLSVLVVVVLAMGIAAPVVL).

This sequence belongs to the CPA3 antiporters (TC 2.A.63) subunit D family. As to quaternary structure, may form a heterooligomeric complex that consists of seven subunits: mnhA2, mnhB2, mnhC2, mnhD2, mnhE2, mnhF2 and mnhG2.

Its subcellular location is the cell membrane. The sequence is that of Putative antiporter subunit mnhD2 (mnhD2) from Staphylococcus epidermidis (strain ATCC 35984 / DSM 28319 / BCRC 17069 / CCUG 31568 / BM 3577 / RP62A).